Reading from the N-terminus, the 533-residue chain is SH3 and F-BAR domain-containing protein DDB_G0271676 (533 aa).

Residues Arg5–Asp258 enclose the F-BAR domain. Residues Arg76–Glu186 adopt a coiled-coil conformation. Basic and acidic residues-rich tracts occupy residues Leu126 to Ser155 and Lys162 to Tyr184. Disordered regions lie at residues Leu126–Tyr184 and Ser301–Asn405. Low complexity-rich tracts occupy residues Ser318–Gln327, Asn340–Asn360, Pro372–Asn385, and Ser392–Asn405. 2 consecutive SH3 domains span residues Ser406–Asp468 and Val476–Ile533.

This chain is SH3 and F-BAR domain-containing protein DDB_G0271676, found in Dictyostelium discoideum (Social amoeba).